The primary structure comprises 417 residues: NADP-specific glutamate dehydrogenase A1 (417 aa).

Residue K105 is part of the active site.

This sequence belongs to the Glu/Leu/Phe/Val dehydrogenases family. Homohexamer.

It catalyses the reaction L-glutamate + NADP(+) + H2O = 2-oxoglutarate + NH4(+) + NADPH + H(+). The chain is NADP-specific glutamate dehydrogenase A1 (gdhA1) from Halobacterium salinarum (Halobacterium halobium).